Reading from the N-terminus, the 366-residue chain is tRNA/tmRNA (uracil-C(5))-methyltransferase (366 aa).

Residues Q190, Y218, N223, E239, and D299 each coordinate S-adenosyl-L-methionine. C324 (nucleophile) is an active-site residue. E358 acts as the Proton acceptor in catalysis.

The protein belongs to the class I-like SAM-binding methyltransferase superfamily. RNA M5U methyltransferase family. TrmA subfamily.

It catalyses the reaction uridine(54) in tRNA + S-adenosyl-L-methionine = 5-methyluridine(54) in tRNA + S-adenosyl-L-homocysteine + H(+). The enzyme catalyses uridine(341) in tmRNA + S-adenosyl-L-methionine = 5-methyluridine(341) in tmRNA + S-adenosyl-L-homocysteine + H(+). Dual-specificity methyltransferase that catalyzes the formation of 5-methyluridine at position 54 (m5U54) in all tRNAs, and that of position 341 (m5U341) in tmRNA (transfer-mRNA). The sequence is that of tRNA/tmRNA (uracil-C(5))-methyltransferase from Escherichia coli O157:H7 (strain EC4115 / EHEC).